A 307-amino-acid chain; its full sequence is Ribosomal RNA small subunit methyltransferase H (307 aa).

S-adenosyl-L-methionine contacts are provided by residues 32–34, Asp52, Phe78, Asp99, and Gln106; that span reads GGH.

It belongs to the methyltransferase superfamily. RsmH family.

The protein localises to the cytoplasm. It catalyses the reaction cytidine(1402) in 16S rRNA + S-adenosyl-L-methionine = N(4)-methylcytidine(1402) in 16S rRNA + S-adenosyl-L-homocysteine + H(+). Functionally, specifically methylates the N4 position of cytidine in position 1402 (C1402) of 16S rRNA. The sequence is that of Ribosomal RNA small subunit methyltransferase H from Acinetobacter baumannii (strain SDF).